The chain runs to 48 residues: Delta-actitoxin-Bgr2b (48 aa).

Intrachain disulfides connect Cys4–Cys45, Cys6–Cys35, and Cys28–Cys46.

The protein belongs to the sea anemone sodium channel inhibitory toxin family. Type I subfamily.

It localises to the secreted. The protein localises to the nematocyst. Functionally, binds voltage-dependently at site 3 of sodium channels (Nav) and inhibits the inactivation of the activated channels, thereby blocking neuronal transmission. Has effect on SCN4A/SCN1B, and SCN5A/SCN1B, has no effect on SCN2A/SCN1B, and SCN10A/SCN1B. Possesses the highest efficacy for the insect sodium channel para/tipE. Also interacts with sodium channels in cardiac cells. Shows lethality to crabs. The protein is Delta-actitoxin-Bgr2b of Bunodosoma granuliferum (Red warty sea anemone).